The primary structure comprises 612 residues: UvrABC system protein C (612 aa).

Positions T11–I90 constitute a GIY-YIG domain. One can recognise a UVR domain in the interval S200–T235.

The protein belongs to the UvrC family. As to quaternary structure, interacts with UvrB in an incision complex.

The protein localises to the cytoplasm. In terms of biological role, the UvrABC repair system catalyzes the recognition and processing of DNA lesions. UvrC both incises the 5' and 3' sides of the lesion. The N-terminal half is responsible for the 3' incision and the C-terminal half is responsible for the 5' incision. In Syntrophotalea carbinolica (strain DSM 2380 / NBRC 103641 / GraBd1) (Pelobacter carbinolicus), this protein is UvrABC system protein C.